The sequence spans 374 residues: Putative phosphoserine aminotransferase (374 aa).

R48 serves as a coordination point for L-glutamate. Pyridoxal 5'-phosphate-binding positions include 82-83, F106, T152, D174, and Q197; that span reads AT. K198 carries the post-translational modification N6-(pyridoxal phosphate)lysine. 249–250 lines the pyridoxal 5'-phosphate pocket; sequence NT.

It belongs to the class-V pyridoxal-phosphate-dependent aminotransferase family. SerC subfamily. As to quaternary structure, homodimer. The cofactor is pyridoxal 5'-phosphate.

The protein resides in the cytoplasm. The enzyme catalyses O-phospho-L-serine + 2-oxoglutarate = 3-phosphooxypyruvate + L-glutamate. It carries out the reaction 4-(phosphooxy)-L-threonine + 2-oxoglutarate = (R)-3-hydroxy-2-oxo-4-phosphooxybutanoate + L-glutamate. It participates in amino-acid biosynthesis; L-serine biosynthesis; L-serine from 3-phospho-D-glycerate: step 2/3. Its pathway is cofactor biosynthesis; pyridoxine 5'-phosphate biosynthesis; pyridoxine 5'-phosphate from D-erythrose 4-phosphate: step 3/5. In terms of biological role, catalyzes the reversible conversion of 3-phosphohydroxypyruvate to phosphoserine and of 3-hydroxy-2-oxo-4-phosphonooxybutanoate to phosphohydroxythreonine. This chain is Putative phosphoserine aminotransferase, found in Mycolicibacterium paratuberculosis (strain ATCC BAA-968 / K-10) (Mycobacterium paratuberculosis).